Consider the following 2045-residue polypeptide: Non-reducing polyketide synthase pks27 (2045 aa).

The tract at residues 10-247 is N-terminal acylcarrier protein transacylase domain (SAT); the sequence is IVFGDLTCDS…LTIPIYAPYH (238 aa). Positions 380–813 constitute a Ketosynthase family 3 (KS3) domain; sequence HSKLAIIGYS…GGNSSVLIED (434 aa). Residues Cys552, His687, and His731 each act as for beta-ketoacyl synthase activity in the active site. Positions 913–1213 are malonyl-CoA:ACP transacylase (MAT) domain; sequence FAFTGQGSQY…VPTLQRNKDT (301 aa). Residues 1289 to 1422 are N-terminal hotdog fold; the sequence is HKLVEEKKDG…ASITFPDAKA (134 aa). Residues 1289–1599 form the PKS/mFAS DH domain; it reads HKLVEEKKDG…AQGVPRRLMD (311 aa). The active-site Proton acceptor; for dehydratase activity is His1321. The interval 1442 to 1599 is C-terminal hotdog fold; that stretch reads AARLNTDDRV…AQGVPRRLMD (158 aa). Asp1511 acts as the Proton donor; for dehydratase activity in catalysis. Residues 1612-1636 form a disordered region; it reads APAGGTLNASQSAAANPAADPSAQA. Positions 1619 to 1636 are enriched in low complexity; the sequence is NASQSAAANPAADPSAQA. A Carrier domain is found at 1635 to 1712; sequence QADSDNWQAA…ELEAFWKQGA (78 aa). The tract at residues 1640-1709 is product template (PT) domain; the sequence is NWQAALKIIS…TIKELEAFWK (70 aa). An O-(pantetheine 4'-phosphoryl)serine modification is found at Ser1672. A disordered region spans residues 1735-1776; that stretch reads EAEVDQDKNSSDEDRSSLGTSSYEVISPNTTETTPEITKTSS. Residues 1739-1750 are compositionally biased toward basic and acidic residues; sequence DQDKNSSDEDRS. The segment covering 1760-1776 has biased composition (low complexity); sequence ISPNTTETTPEITKTSS. The thioesterase stretch occupies residues 1798-2039; the sequence is TLFLLPDGSG…AKRLSEMIEG (242 aa).

The cofactor is pantetheine 4'-phosphate.

It functions in the pathway secondary metabolite biosynthesis. Non-reducing polyketide synthase (NRPKS); part of the gene cluster 27 that mediates the biosynthesis of asparasone A, a sclerotium-specific anthraquinone pigment important for sclerotial survival. Catalyzes the formation of the aromatic polyketide from acetyl coenzyme A and seven malonyl coenzyme A molecules. Through its product template (PT) domain, catalyzes the cyclization of polyketide backbone via C6-C11 aldolcondensation. This is Non-reducing polyketide synthase pks27 from Aspergillus flavus (strain ATCC 200026 / FGSC A1120 / IAM 13836 / NRRL 3357 / JCM 12722 / SRRC 167).